The primary structure comprises 143 residues: Transcriptional regulator MraZ (143 aa).

2 SpoVT-AbrB domains span residues 5–47 and 76–119; these read EFDH…TLEE and AVEV…DRET.

It belongs to the MraZ family. Forms oligomers.

Its subcellular location is the cytoplasm. The protein localises to the nucleoid. The polypeptide is Transcriptional regulator MraZ (Staphylococcus epidermidis (strain ATCC 35984 / DSM 28319 / BCRC 17069 / CCUG 31568 / BM 3577 / RP62A)).